Consider the following 857-residue polypeptide: Median body protein (857 aa).

2 coiled-coil regions span residues 169 to 546 (HNAL…MRTE) and 571 to 793 (LAHL…TKAM).

The protein resides in the cytoplasm. It localises to the cytoskeleton. Functionally, structural component of the ventral disk involved in maintanance of a domed conformation of the disk required for proper attachment. May have a role in immobilizing the microtubules between cell divisions. The protein is Median body protein of Giardia intestinalis (strain ATCC 50803 / WB clone C6) (Giardia lamblia).